A 437-amino-acid polypeptide reads, in one-letter code: ATP-dependent protease ATPase subunit HslU (437 aa).

ATP contacts are provided by residues Val-18, 60 to 65 (GVGKTE), Asp-249, Glu-315, and Arg-387.

This sequence belongs to the ClpX chaperone family. HslU subfamily. In terms of assembly, a double ring-shaped homohexamer of HslV is capped on each side by a ring-shaped HslU homohexamer. The assembly of the HslU/HslV complex is dependent on binding of ATP.

The protein resides in the cytoplasm. Functionally, ATPase subunit of a proteasome-like degradation complex; this subunit has chaperone activity. The binding of ATP and its subsequent hydrolysis by HslU are essential for unfolding of protein substrates subsequently hydrolyzed by HslV. HslU recognizes the N-terminal part of its protein substrates and unfolds these before they are guided to HslV for hydrolysis. This chain is ATP-dependent protease ATPase subunit HslU, found in Rhodospirillum centenum (strain ATCC 51521 / SW).